Consider the following 178-residue polypeptide: Large ribosomal subunit protein uL6 (178 aa).

The protein belongs to the universal ribosomal protein uL6 family. As to quaternary structure, part of the 50S ribosomal subunit.

Its function is as follows. This protein binds to the 23S rRNA, and is important in its secondary structure. It is located near the subunit interface in the base of the L7/L12 stalk, and near the tRNA binding site of the peptidyltransferase center. In Enterococcus faecalis (strain ATCC 700802 / V583), this protein is Large ribosomal subunit protein uL6.